The chain runs to 259 residues: Acetylglutamate kinase (259 aa).

Residues 46-47 (GG), R68, and N162 each bind substrate.

Belongs to the acetylglutamate kinase family. ArgB subfamily.

The protein resides in the cytoplasm. The catalysed reaction is N-acetyl-L-glutamate + ATP = N-acetyl-L-glutamyl 5-phosphate + ADP. The protein operates within amino-acid biosynthesis; L-arginine biosynthesis; N(2)-acetyl-L-ornithine from L-glutamate: step 2/4. Catalyzes the ATP-dependent phosphorylation of N-acetyl-L-glutamate. This Roseiflexus castenholzii (strain DSM 13941 / HLO8) protein is Acetylglutamate kinase.